A 186-amino-acid polypeptide reads, in one-letter code: Signal peptidase I P (186 aa).

Residues 1–15 (MTKEKVFKKKSSILE) lie on the Cytoplasmic side of the membrane. The helical transmembrane segment at 16-35 (WGKAIVIAVILALLIRNFLF) threads the bilayer. Over 36-186 (EPYVVEGKSM…FPFSNMRKAK (151 aa)) the chain is Extracellular. Active-site residues include serine 44 and lysine 86.

This sequence belongs to the peptidase S26 family.

The protein resides in the cell membrane. It carries out the reaction Cleavage of hydrophobic, N-terminal signal or leader sequences from secreted and periplasmic proteins.. The polypeptide is Signal peptidase I P (sipP) (Bacillus subtilis subsp. natto).